We begin with the raw amino-acid sequence, 190 residues long: CASP-like protein 2U2 (190 aa).

At 1-10 the chain is on the cytoplasmic side; sequence MGEKMQGFQG. The helical transmembrane segment at 11-31 threads the bilayer; that stretch reads WSIGIRFLTSCVSIASLILLL. Topologically, residues 32–59 are extracellular; sequence KSKQTVQVSVGLDYVTQQVKYSDTSAFV. A helical transmembrane segment spans residues 60 to 80; that stretch reads YLVFSDILVAVYCIVVLVGLI. Over 81-94 the chain is Cytoplasmic; the sequence is PAALGKSHPGKAGQ. Residues 95–115 form a helical membrane-spanning segment; the sequence is WAIFIFDQVLAYVLLAAASSA. At 116–144 the chain is on the extracellular side; sequence TEVAYLADKGMAKTSWEAVCPRFAHFCHT. A helical membrane pass occupies residues 145 to 165; sequence VMASISLSFVAVLLLALLAVV. Over 166–190 the chain is Cytoplasmic; it reads SASGLFGRFYRRPLFAVKMRHNTLI.

Belongs to the Casparian strip membrane proteins (CASP) family. In terms of assembly, homodimer and heterodimers.

The protein localises to the cell membrane. The chain is CASP-like protein 2U2 from Pteridium aquilinum subsp. aquilinum (Bracken fern).